We begin with the raw amino-acid sequence, 264 residues long: Apolipoprotein A-I (264 aa).

Residues 1 to 18 (MRGVLVTLAVLFLTGTQA) form the signal peptide. 2 consecutive repeat copies span residues 67–88 (LKLA…EDMT) and 89–110 (PYYR…AELT). The interval 67 to 264 (LKLADNLDTL…LLDEVQKTMA (198 aa)) is 10 X approximate tandem repeats. A 3; half-length repeat occupies 111-121 (KDLEEVKEKIR). 5 repeat units span residues 122 to 143 (PFLD…QRLA), 144 to 165 (PVAQ…AKLT), 166 to 187 (PVAE…KNLA), 188 to 209 (PYSS…ERGI), and 210 to 231 (PQAS…EKMT). The stretch at 232 to 242 (PLVQEFKERLT) is one 9; half-length repeat. Copy 10 of the repeat occupies 243–264 (PYAENLKNRLIDLLDEVQKTMA).

This sequence belongs to the apolipoprotein A1/A4/E family. In terms of tissue distribution, major protein of VLDL, HDL, LDL and in chylomicrons. Expressed in a number of tissues including liver, small intestine, lung, kidney, heart and muscle with highest expression in liver and small intestine.

It is found in the secreted. In terms of biological role, participates in the reverse transport of cholesterol from tissues to the liver for excretion by promoting cholesterol efflux from tissues and by acting as a cofactor for the lecithin cholesterol acyltransferase (LCAT). The polypeptide is Apolipoprotein A-I (APOA1) (Coturnix japonica (Japanese quail)).